The following is a 240-amino-acid chain: Uridylate kinase (240 aa).

Residue 14 to 17 (KLSG) coordinates ATP. Gly-56 contributes to the UMP binding site. Residues Gly-57 and Arg-61 each coordinate ATP. UMP is bound by residues Asp-76 and 137-144 (TGNPFFTT). ATP-binding residues include Thr-164, Tyr-170, and Asp-173.

This sequence belongs to the UMP kinase family. As to quaternary structure, homohexamer.

It localises to the cytoplasm. The enzyme catalyses UMP + ATP = UDP + ADP. It functions in the pathway pyrimidine metabolism; CTP biosynthesis via de novo pathway; UDP from UMP (UMPK route): step 1/1. With respect to regulation, inhibited by UTP. Functionally, catalyzes the reversible phosphorylation of UMP to UDP. The chain is Uridylate kinase from Acidovorax sp. (strain JS42).